The chain runs to 152 residues: Deoxyuridine 5'-triphosphate nucleotidohydrolase (152 aa).

Residues 71–73 (RSG), asparagine 84, 88–90 (LID), and methionine 98 contribute to the substrate site.

The protein belongs to the dUTPase family. Mg(2+) is required as a cofactor.

The catalysed reaction is dUTP + H2O = dUMP + diphosphate + H(+). Its pathway is pyrimidine metabolism; dUMP biosynthesis; dUMP from dCTP (dUTP route): step 2/2. In terms of biological role, this enzyme is involved in nucleotide metabolism: it produces dUMP, the immediate precursor of thymidine nucleotides and it decreases the intracellular concentration of dUTP so that uracil cannot be incorporated into DNA. The sequence is that of Deoxyuridine 5'-triphosphate nucleotidohydrolase from Erwinia tasmaniensis (strain DSM 17950 / CFBP 7177 / CIP 109463 / NCPPB 4357 / Et1/99).